Consider the following 163-residue polypeptide: Staphylokinase (163 aa).

Residues 1-27 form the signal peptide; sequence MLKRSLLFLTVLLLLFSFSSITNEVSA.

The protein belongs to the staphylokinase family.

It is found in the secreted. Functionally, potent plasminogen activator that converts plasminogen into plasmin. It forms a 1:1 complex with plasmin, which in turn activates other plasminogen molecules. The chain is Staphylokinase (sak) from Staphylococcus aureus (Bacteriophage P42D).